The following is a 399-amino-acid chain: Methylthioribose kinase (399 aa).

ATP is bound by residues N40, K57, and 111-113 (EDL). D229 is a binding site for substrate. 246–248 (DAE) serves as a coordination point for ATP. Residue R344 coordinates substrate.

It belongs to the methylthioribose kinase family. In terms of assembly, homodimer.

It catalyses the reaction 5-(methylsulfanyl)-D-ribose + ATP = 5-(methylsulfanyl)-alpha-D-ribose 1-phosphate + ADP + H(+). Its pathway is amino-acid biosynthesis; L-methionine biosynthesis via salvage pathway; S-methyl-5-thio-alpha-D-ribose 1-phosphate from S-methyl-5'-thioadenosine (hydrolase route): step 2/2. Catalyzes the phosphorylation of methylthioribose into methylthioribose-1-phosphate. In Klebsiella pneumoniae (strain 342), this protein is Methylthioribose kinase.